The chain runs to 176 residues: 3-hydroxydecanoyl-[acyl-carrier-protein] dehydratase (176 aa).

Histidine 71 is an active-site residue.

This sequence belongs to the thioester dehydratase family. FabA subfamily. In terms of assembly, homodimer.

Its subcellular location is the cytoplasm. It carries out the reaction a (3R)-hydroxyacyl-[ACP] = a (2E)-enoyl-[ACP] + H2O. The enzyme catalyses (3R)-hydroxydecanoyl-[ACP] = (2E)-decenoyl-[ACP] + H2O. The catalysed reaction is (2E)-decenoyl-[ACP] = (3Z)-decenoyl-[ACP]. The protein operates within lipid metabolism; fatty acid biosynthesis. Functionally, necessary for the introduction of cis unsaturation into fatty acids. Catalyzes the dehydration of (3R)-3-hydroxydecanoyl-ACP to E-(2)-decenoyl-ACP and then its isomerization to Z-(3)-decenoyl-ACP. Can catalyze the dehydratase reaction for beta-hydroxyacyl-ACPs with saturated chain lengths up to 16:0, being most active on intermediate chain length. This is 3-hydroxydecanoyl-[acyl-carrier-protein] dehydratase from Rhodopseudomonas palustris (strain BisB18).